Reading from the N-terminus, the 450-residue chain is 3-phosphoshikimate 1-carboxyvinyltransferase (450 aa).

3-phosphoshikimate is bound by residues Lys23, Ser24, and Arg28. Lys23 provides a ligand contact to phosphoenolpyruvate. 2 residues coordinate phosphoenolpyruvate: Gly96 and Arg124. Positions 167, 168, 169, 196, 311, and 340 each coordinate 3-phosphoshikimate. Gln169 contributes to the phosphoenolpyruvate binding site. Glu311 acts as the Proton acceptor in catalysis. Phosphoenolpyruvate-binding residues include Arg344, Arg385, and Lys410. The segment at 426–450 is disordered; it reads GQGWGYPQPRSGQRARRATGQGSGG.

This sequence belongs to the EPSP synthase family. In terms of assembly, monomer.

It is found in the cytoplasm. The catalysed reaction is 3-phosphoshikimate + phosphoenolpyruvate = 5-O-(1-carboxyvinyl)-3-phosphoshikimate + phosphate. The protein operates within metabolic intermediate biosynthesis; chorismate biosynthesis; chorismate from D-erythrose 4-phosphate and phosphoenolpyruvate: step 6/7. Functionally, catalyzes the transfer of the enolpyruvyl moiety of phosphoenolpyruvate (PEP) to the 5-hydroxyl of shikimate-3-phosphate (S3P) to produce enolpyruvyl shikimate-3-phosphate and inorganic phosphate. The chain is 3-phosphoshikimate 1-carboxyvinyltransferase from Mycobacterium tuberculosis (strain ATCC 25177 / H37Ra).